The sequence spans 225 residues: Uracil-DNA glycosylase (225 aa).

D65 (proton acceptor) is an active-site residue.

The protein belongs to the uracil-DNA glycosylase (UDG) superfamily. UNG family.

It localises to the cytoplasm. It catalyses the reaction Hydrolyzes single-stranded DNA or mismatched double-stranded DNA and polynucleotides, releasing free uracil.. In terms of biological role, excises uracil residues from the DNA which can arise as a result of misincorporation of dUMP residues by DNA polymerase or due to deamination of cytosine. The chain is Uracil-DNA glycosylase from Bacillus cereus (strain ATCC 10987 / NRS 248).